The following is a 283-amino-acid chain: 4-hydroxy-3-methylbut-2-enyl diphosphate reductase (283 aa).

Cysteine 12 contacts [4Fe-4S] cluster. 2 residues coordinate (2E)-4-hydroxy-3-methylbut-2-enyl diphosphate: histidine 40 and histidine 73. Positions 40 and 73 each coordinate dimethylallyl diphosphate. Isopentenyl diphosphate is bound by residues histidine 40 and histidine 73. Position 95 (cysteine 95) interacts with [4Fe-4S] cluster. Histidine 123 is a (2E)-4-hydroxy-3-methylbut-2-enyl diphosphate binding site. Residue histidine 123 participates in dimethylallyl diphosphate binding. Position 123 (histidine 123) interacts with isopentenyl diphosphate. Catalysis depends on glutamate 125, which acts as the Proton donor. Residue threonine 161 participates in (2E)-4-hydroxy-3-methylbut-2-enyl diphosphate binding. Residue cysteine 189 coordinates [4Fe-4S] cluster. 3 residues coordinate (2E)-4-hydroxy-3-methylbut-2-enyl diphosphate: serine 217, asparagine 219, and serine 261. Residues serine 217, asparagine 219, and serine 261 each coordinate dimethylallyl diphosphate. 3 residues coordinate isopentenyl diphosphate: serine 217, asparagine 219, and serine 261.

Belongs to the IspH family. [4Fe-4S] cluster serves as cofactor.

It carries out the reaction isopentenyl diphosphate + 2 oxidized [2Fe-2S]-[ferredoxin] + H2O = (2E)-4-hydroxy-3-methylbut-2-enyl diphosphate + 2 reduced [2Fe-2S]-[ferredoxin] + 2 H(+). The enzyme catalyses dimethylallyl diphosphate + 2 oxidized [2Fe-2S]-[ferredoxin] + H2O = (2E)-4-hydroxy-3-methylbut-2-enyl diphosphate + 2 reduced [2Fe-2S]-[ferredoxin] + 2 H(+). Its pathway is isoprenoid biosynthesis; dimethylallyl diphosphate biosynthesis; dimethylallyl diphosphate from (2E)-4-hydroxy-3-methylbutenyl diphosphate: step 1/1. It participates in isoprenoid biosynthesis; isopentenyl diphosphate biosynthesis via DXP pathway; isopentenyl diphosphate from 1-deoxy-D-xylulose 5-phosphate: step 6/6. Catalyzes the conversion of 1-hydroxy-2-methyl-2-(E)-butenyl 4-diphosphate (HMBPP) into a mixture of isopentenyl diphosphate (IPP) and dimethylallyl diphosphate (DMAPP). Acts in the terminal step of the DOXP/MEP pathway for isoprenoid precursor biosynthesis. In Geobacter sp. (strain M21), this protein is 4-hydroxy-3-methylbut-2-enyl diphosphate reductase.